Here is a 619-residue protein sequence, read N- to C-terminus: MALLQIAEPGLSAAPHQHRLAVGIDLGTTNSLVATVRSGSAAVLPDETGRSLLPSVVRYGDQGVLAVGYDAQKEQNRDPHNTIVSVKRFMGRGVSDIKDAGSLPYRFVDAPGMVQLVTRAGVKSPVEVSSDILRALKERAEASLGGELTGAVITVPAYFDDAQRQATKDAARLAGLNVLRLLNEPTAAAIAYGLDNGSEGTYVVYDLGGGTLDVSILKLTRGVFEVLATSGDSALGGDDFDHRVFCWLLEQAGVTAPSAHDMRLLHTRAREAKEALTDHASTRVTAILSDGQSLDLELDQATLHAITKTLVDKTLTPVRKALRDAKIAPEDIQGVVMVGGATRMPHVQKAVADYFGRAPLTNLDPDKVVALGAAIQANVLAGNKQDDEWLLLDVLPLSLGIETMGGLTEKIIPRNSTIPVARAQDFTTFKDGQTAMSIHVLQGERELVSDCRSLAKFTLTGIPPMVAGAARIRITFQVDADGLLSVTAREQTSGVESSIEVKPSYGLSDDEISRMLSESLANVQEDIEARKLREAIVDAESLRDATLNALAQDGDLLDQAERAEVEAAVAAVASAIAEGVTRRVNEASAALNHATETFASRRMDRNIQRALKGHKITDL.

Belongs to the heat shock protein 70 family.

Chaperone involved in the maturation of iron-sulfur cluster-containing proteins. Has a low intrinsic ATPase activity which is markedly stimulated by HscB. This chain is Chaperone protein HscA homolog, found in Chromobacterium violaceum (strain ATCC 12472 / DSM 30191 / JCM 1249 / CCUG 213 / NBRC 12614 / NCIMB 9131 / NCTC 9757 / MK).